We begin with the raw amino-acid sequence, 182 residues long: Large ribosomal subunit protein uL22 (182 aa).

Positions 159–182 are disordered; that stretch reads AAAKPKATAKKATGEKSKAKTKAN.

It belongs to the universal ribosomal protein uL22 family. Part of the 50S ribosomal subunit.

In terms of biological role, this protein binds specifically to 23S rRNA; its binding is stimulated by other ribosomal proteins, e.g. L4, L17, and L20. It is important during the early stages of 50S assembly. It makes multiple contacts with different domains of the 23S rRNA in the assembled 50S subunit and ribosome. Functionally, the globular domain of the protein is located near the polypeptide exit tunnel on the outside of the subunit, while an extended beta-hairpin is found that lines the wall of the exit tunnel in the center of the 70S ribosome. The chain is Large ribosomal subunit protein uL22 from Cytophaga hutchinsonii (strain ATCC 33406 / DSM 1761 / CIP 103989 / NBRC 15051 / NCIMB 9469 / D465).